A 346-amino-acid polypeptide reads, in one-letter code: UDP-N-acetylenolpyruvoylglucosamine reductase (346 aa).

One can recognise an FAD-binding PCMH-type domain in the interval 23–194 (FDVRAQFACR…TSVTFRLPKV (172 aa)). Arg170 is a catalytic residue. The active-site Proton donor is Ser246. Residue Glu342 is part of the active site.

It belongs to the MurB family. FAD is required as a cofactor.

It is found in the cytoplasm. It carries out the reaction UDP-N-acetyl-alpha-D-muramate + NADP(+) = UDP-N-acetyl-3-O-(1-carboxyvinyl)-alpha-D-glucosamine + NADPH + H(+). It participates in cell wall biogenesis; peptidoglycan biosynthesis. Cell wall formation. In Paraburkholderia phytofirmans (strain DSM 17436 / LMG 22146 / PsJN) (Burkholderia phytofirmans), this protein is UDP-N-acetylenolpyruvoylglucosamine reductase.